We begin with the raw amino-acid sequence, 713 residues long: Phenylalanine--tRNA ligase beta subunit (713 aa).

The tRNA-binding domain occupies 39-153; that stretch reads IRHVENIKYG…EANLNEDPIA (115 aa). Residues 379–454 enclose the B5 domain; it reads LKPKEILFDH…RFYGYDNFPI (76 aa). Mg(2+) is bound by residues Asp-432, Asp-438, Glu-441, and Glu-442.

It belongs to the phenylalanyl-tRNA synthetase beta subunit family. Type 1 subfamily. Tetramer of two alpha and two beta subunits. Mg(2+) is required as a cofactor.

The protein localises to the cytoplasm. The catalysed reaction is tRNA(Phe) + L-phenylalanine + ATP = L-phenylalanyl-tRNA(Phe) + AMP + diphosphate + H(+). This chain is Phenylalanine--tRNA ligase beta subunit, found in Mycoplasma mobile (strain ATCC 43663 / 163K / NCTC 11711) (Mesomycoplasma mobile).